The chain runs to 710 residues: Dihydroxyacetone synthase (710 aa).

Thiamine diphosphate is bound by residues H78 and 128–130 (GPL). Mg(2+) contacts are provided by D169, N199, and V201. N199 lines the thiamine diphosphate pocket. Residues H275, E433, and F461 each contribute to the thiamine diphosphate site. E433 (proton donor) is an active-site residue. The Microbody targeting signal motif lies at 708 to 710 (NKL).

Belongs to the transketolase family. Requires Mg(2+) as cofactor. Ca(2+) serves as cofactor. It depends on Mn(2+) as a cofactor. The cofactor is Co(2+). Thiamine diphosphate is required as a cofactor.

It is found in the peroxisome. It catalyses the reaction D-xylulose 5-phosphate + formaldehyde = dihydroxyacetone + D-glyceraldehyde 3-phosphate. Functionally, this is the major methanol assimilatory enzyme from the methylotrophic Hansenula polymorpha. The chain is Dihydroxyacetone synthase (DAS) from Pichia angusta (Yeast).